The sequence spans 82 residues: Small ribosomal subunit protein bS18 (82 aa).

A disordered region spans residues 1 to 20 (MVDINQIPTRRPFHRRRKTC).

The protein belongs to the bacterial ribosomal protein bS18 family. Part of the 30S ribosomal subunit. Forms a tight heterodimer with protein bS6.

Functionally, binds as a heterodimer with protein bS6 to the central domain of the 16S rRNA, where it helps stabilize the platform of the 30S subunit. This is Small ribosomal subunit protein bS18 from Brucella anthropi (strain ATCC 49188 / DSM 6882 / CCUG 24695 / JCM 21032 / LMG 3331 / NBRC 15819 / NCTC 12168 / Alc 37) (Ochrobactrum anthropi).